The primary structure comprises 361 residues: Aminomethyltransferase (361 aa).

The protein belongs to the GcvT family. The glycine cleavage system is composed of four proteins: P, T, L and H.

The enzyme catalyses N(6)-[(R)-S(8)-aminomethyldihydrolipoyl]-L-lysyl-[protein] + (6S)-5,6,7,8-tetrahydrofolate = N(6)-[(R)-dihydrolipoyl]-L-lysyl-[protein] + (6R)-5,10-methylene-5,6,7,8-tetrahydrofolate + NH4(+). Functionally, the glycine cleavage system catalyzes the degradation of glycine. This Bacteroides thetaiotaomicron (strain ATCC 29148 / DSM 2079 / JCM 5827 / CCUG 10774 / NCTC 10582 / VPI-5482 / E50) protein is Aminomethyltransferase.